A 306-amino-acid chain; its full sequence is Pantothenate kinase (306 aa).

An ATP-binding site is contributed by 91-98; the sequence is GSVAVGKS.

The protein belongs to the prokaryotic pantothenate kinase family.

It localises to the cytoplasm. The enzyme catalyses (R)-pantothenate + ATP = (R)-4'-phosphopantothenate + ADP + H(+). The protein operates within cofactor biosynthesis; coenzyme A biosynthesis; CoA from (R)-pantothenate: step 1/5. The protein is Pantothenate kinase of Streptococcus equi subsp. equi (strain 4047).